The sequence spans 184 residues: ATP synthase subunit b, chloroplastic (184 aa).

The chain crosses the membrane as a helical span at residues 27–49 (LATNPINLSVVLGVLIFFGKGVL).

The protein belongs to the ATPase B chain family. In terms of assembly, F-type ATPases have 2 components, F(1) - the catalytic core - and F(0) - the membrane proton channel. F(1) has five subunits: alpha(3), beta(3), gamma(1), delta(1), epsilon(1). F(0) has four main subunits: a(1), b(1), b'(1) and c(10-14). The alpha and beta chains form an alternating ring which encloses part of the gamma chain. F(1) is attached to F(0) by a central stalk formed by the gamma and epsilon chains, while a peripheral stalk is formed by the delta, b and b' chains.

The protein resides in the plastid. It localises to the chloroplast thylakoid membrane. Its function is as follows. F(1)F(0) ATP synthase produces ATP from ADP in the presence of a proton or sodium gradient. F-type ATPases consist of two structural domains, F(1) containing the extramembraneous catalytic core and F(0) containing the membrane proton channel, linked together by a central stalk and a peripheral stalk. During catalysis, ATP synthesis in the catalytic domain of F(1) is coupled via a rotary mechanism of the central stalk subunits to proton translocation. In terms of biological role, component of the F(0) channel, it forms part of the peripheral stalk, linking F(1) to F(0). The protein is ATP synthase subunit b, chloroplastic of Nicotiana tomentosiformis (Tobacco).